A 677-amino-acid chain; its full sequence is Methionine--tRNA ligase (677 aa).

A 'HIGH' region motif is present at residues Pro-15–His-25. Positions 146, 149, 159, and 162 each coordinate Zn(2+). Positions Lys-333 to Ser-337 match the 'KMSKS' region motif. Lys-336 contacts ATP. The 103-residue stretch at Asp-575–Lys-677 folds into the tRNA-binding domain.

The protein belongs to the class-I aminoacyl-tRNA synthetase family. MetG type 1 subfamily. As to quaternary structure, homodimer. Requires Zn(2+) as cofactor.

Its subcellular location is the cytoplasm. The enzyme catalyses tRNA(Met) + L-methionine + ATP = L-methionyl-tRNA(Met) + AMP + diphosphate. Is required not only for elongation of protein synthesis but also for the initiation of all mRNA translation through initiator tRNA(fMet) aminoacylation. The protein is Methionine--tRNA ligase of Klebsiella pneumoniae (strain 342).